Here is a 213-residue protein sequence, read N- to C-terminus: Ribonuclease HII (213 aa).

Residues G18–N213 form the RNase H type-2 domain. A divalent metal cation is bound by residues D24, E25, and D116.

The protein belongs to the RNase HII family. Mn(2+) is required as a cofactor. Mg(2+) serves as cofactor.

It is found in the cytoplasm. The enzyme catalyses Endonucleolytic cleavage to 5'-phosphomonoester.. Its function is as follows. Endonuclease that specifically degrades the RNA of RNA-DNA hybrids. The chain is Ribonuclease HII from Shewanella sediminis (strain HAW-EB3).